A 1896-amino-acid polypeptide reads, in one-letter code: MRELEAKATKDVERNLSRDLVQEEEQLMEEKKKKKDDKKKKEAAQKKATEQKIKVPEQIKPSVSQPQPANSDNGTSTATSTNNNAKRATASNQQPPPPQQQQPQQEQQQQQPQALPRYPREVPPRFRHQEHKQLLKRGQHFPVIAANLGSAVKVLNSQSESSAVTNQQPQNNGEVQNSKSQSDINHNTSGSHYENCQRGPVSSTSDCSTSCKNAVNDLLEKEAWPSAPGSDPELAPECIDADSASNSESERNITVMASGNTGGEKDGLRNSTGLGSQSKFVVGSSSNNVGHGSSTGPWGFPHGALISTCQVSVDAPESKPESSNNRMNAWGTVSSSSNGGLNPSTLNSASNHGAWPVLENNGLALKGPVGSGSSGINIQCSTIGQMPNNQNINSKVSGSSTHGTWGSLQETCEPEVSGTQKVSFSGQPQNITTETTGPNNTTNFMTSSLPNSGSVQNNELPTSNPGAWRVSTMNHPQIQAPSVMNGTSLSHLSNGESKTGGSYGTTWGAYGSNYSGDKCAGPNGQANGDTVNATLMQPGINGPMGTNFQVNTNKGGGVWEPGTVNSQSSPWGSGNGANSGGSRRGWGSPAQNTGTGLSSVEWNKLPSNQHSNDSANGNGKKLTNGWKSTEEDDQGSATSQTNEQNSVWAKAGGTVESDGSAESTGRLEEKVTGESQSRDRRKIDQHTLLQSIVNRTDLDPRVLSNSGWGQTPIKQNTAWDTETSPRGERKTDNGTEAWGSSATQTFNSGACTDKTSPNSNDTSSVSGWGDPKPTLRWGDSKGSNCQGGWEDDSAATGMIKSNQWGGCKEDKSTWNDSQKSKQGWGDGQKSSQGWSISAGDNWGESSRSNHWGEANKKSSSGGSDSDRSISGWNELGKTSSFTWGNNINPNNSSGWDESSKPNSSQGWGDPPKCNQSLGWGDSSKPVSSPDWNKQQDIVGSWGIPPATSKPPGTGWLGGPIPAPAKEEEPTGWEEPSPESIRRKMEIDDGTSAWGDPSKYNYKNVNMWNKNIPEASGRSDQQAQMHRLLPAASAVSSKETSSGSGWGEPWAEPSTPATTVDNGTSAWGKPIDSGPSWGEPITAASNASTWGSSSVGPQSLSKSGPKSMQDGWCGDDMPLPGSRPTGWEEEEDVEIGMWNSNSSQELNSSLNWPPYTKKMSSKGLSGKKRRRERGMMKGGNKQEDAWINPFVKQFSNISFSRDSPEENVQSNKMDLSGGMLQDKRMEIDKHSLNIGDYNRTVGKGPGSRPQISKESSMERNPYFDKNGNPNMFGVGNTAAQPRGMQQPPAQPLSSSQPNLRAQVPPPLLSPQVPVSLLKYAPNNGGLNPLFGPQQVAMLNQLSQLNQLSQISQLQRLLAQQQRAQSQRSAPSANRQQQDQQGRPLSVQQQMMQQSRQLDPSLLVKQQTPPSQQPLHQPAMKSFLDNVMPHTTPELQKGPSPVNAFSNFPIGLNSNLNVNMDMNSIKEPQSRLRKWTTVDSMSVNTSLDQNSSKHGAISSGFRLEESPFVPYDFMNSSTSPASPPGSIGDGWPRAKSPNGSSSVNWPPEFRPGEPWKGYPNIDPETDPYVTPGSVINSLSINTVREVDHLRDRNSGSSSSLNTTLPSTSAWSSIRASNYNVPLSSTAQSTSARNSDSKLTWSPGSVTNTSLAHELWKVPLPPKNITAPSRPPPGLTGQKPPLSTWDNSPLRVGGGWGNSDARYTPGSSWGESSSGRITNWLVLKNLTPQIDGSTLRTLCMQHGPLITFHLNLPHGNALVRYSSKEEVVKAQKSLHMCVLGNTTILAEFASEEEISRFFAQSQSLTPSPGWQSLGSSQSRLGSLDCSHSFSSRTDVNHWNGAGLSGANCGDLHGTSLWGTPHYSTSLWGPPSSDPRGISSPSPINAFLSVDHLGGGGESM.

2 stretches are compositionally biased toward basic and acidic residues: residues 1-21 (MRELEAKATKDVERNLSRDLV) and 39-57 (KKKEAAQKKATEQKIKVPE). Disordered regions lie at residues 1 to 137 (MREL…LLKR), 159 to 209 (SESS…DCST), 222 to 250 (EAWPSAPGSDPELAPECIDADSASNSESE), and 257 to 276 (ASGNTGGEKDGLRNSTGLGS). Residues 1 to 917 (MRELEAKATK…GDPPKCNQSL (917 aa)) are interaction with argonaute family proteins. Composition is skewed to low complexity over residues 69–93 (ANSDNGTSTATSTNNNAKRATASNQ) and 101–113 (QQPQQEQQQQQPQ). Residues 125–137 (RFRHQEHKQLLKR) are compositionally biased toward basic residues. Residues 239-488 (IDADSASNSE…QAPSVMNGTS (250 aa)) are sufficient for interaction with AGO1, AGO3 and AGO4. Sufficient for interaction with AGO2 stretches follow at residues 255–331 (VMAS…NAWG), 303–384 (GALI…STIG), 325–424 (NRMN…KVSF), 394–480 (SKVS…QIQA), and 487–736 (TSLS…NGTE). 2 stretches are compositionally biased toward polar residues: residues 396-410 (VSGSSTHGTWGSLQE) and 417-429 (SGTQKVSFSGQPQ). Disordered stretches follow at residues 396-461 (VSGS…NELP), 548-683 (FQVN…RRKI), 703-998 (LSNS…DPSK), 1011-1126 (IPEA…PTGW), and 1143-1182 (QELNSSLNWPPYTKKMSSKGLSGKKRRRERGMMKGGNKQE). A compositionally biased stretch (low complexity) spans 430–443 (NITTETTGPNNTTN). A compositionally biased stretch (polar residues) spans 444–461 (FMTSSLPNSGSVQNNELP). The tract at residues 551–1279 (NTNKGGGVWE…MFGVGNTAAQ (729 aa)) is sufficient for interaction with AGO1 and AGO4. A compositionally biased stretch (gly residues) spans 573–584 (SGNGANSGGSRR). Polar residues-rich tracts occupy residues 591–617 (QNTGTGLSSVEWNKLPSNQHSNDSANG) and 635–647 (GSATSQTNEQNSV). The span at 665–683 (GRLEEKVTGESQSRDRRKI) shows a compositional bias: basic and acidic residues. Polar residues predominate over residues 703–722 (LSNSGWGQTPIKQNTAWDTE). Residues 723-733 (TSPRGERKTDN) are compositionally biased toward basic and acidic residues. At S724 the chain carries Phosphoserine. Over residues 738–766 (WGSSATQTFNSGACTDKTSPNSNDTSSVS) the composition is skewed to polar residues. The segment covering 858–871 (SSSGGSDSDRSISG) has biased composition (low complexity). A Phosphoserine modification is found at S863. Polar residues-rich tracts occupy residues 876 to 906 (GKTSSFTWGNNINPNNSSGWDESSKPNSSQG) and 924 to 937 (KPVSSPDWNKQQDI). A Phosphoserine modification is found at S976. 3 stretches are compositionally biased toward polar residues: residues 1033 to 1042 (AVSSKETSSG), 1054 to 1064 (TPATTVDNGTS), and 1082 to 1105 (AASNASTWGSSSVGPQSLSKSGPK). The tract at residues 1059–1129 (VDNGTSAWGK…GSRPTGWEEE (71 aa)) is sufficient for interaction with AGO2. The segment covering 1143–1163 (QELNSSLNWPPYTKKMSSKGL) has biased composition (low complexity). Phosphoserine occurs at positions 1197 and 1255. Disordered stretches follow at residues 1234-1256 (GDYNRTVGKGPGSRPQISKESSM), 1273-1306 (VGNTAAQPRGMQQPPAQPLSSSQPNLRAQVPPPL), and 1360-1395 (QRAQSQRSAPSANRQQQDQQGRPLSVQQQMMQQSRQ). Low complexity-rich tracts occupy residues 1284 to 1296 (QQPPAQPLSSSQP) and 1360 to 1376 (QRAQSQRSAPSANRQQQ). Position 1406 is a phosphothreonine (T1406). 2 disordered regions span residues 1512–1570 (MNSS…VTPG) and 1659–1685 (PKNITAPSRPPPGLTGQKPPLSTWDNS). A Phosphoserine modification is found at S1520. The interval 1605–1896 (TSAWSSIRAS…DHLGGGGESM (292 aa)) is sufficient for interaction with AGO2. The RRM domain occupies 1716 to 1788 (NWLVLKNLTP…TTILAEFASE (73 aa)). Phosphoserine is present on residues S1804 and S1825.

It belongs to the GW182 family. As to quaternary structure, interacts with AGO2. Interacts with AGO1, AGO3 and AGO4. Interacts with CNOT1; the interaction is direct and mediates the association with the CCR4-NOT complex. Interacts with ZC3H12A. Interacts with SND1. Interacts with GARRE1.

The protein localises to the cytoplasm. It is found in the P-body. In terms of biological role, plays a role in RNA-mediated gene silencing by both micro-RNAs (miRNAs) and short interfering RNAs (siRNAs). Required for miRNA-dependent repression of translation and for siRNA-dependent endonucleolytic cleavage of complementary mRNAs by argonaute family proteins. As a scaffolding protein, associates with argonaute proteins bound to partially complementary mRNAs, and can simultaneously recruit CCR4-NOT and PAN deadenylase complexes. This is Trinucleotide repeat-containing gene 6A protein (Tnrc6a) from Mus musculus (Mouse).